A 360-amino-acid polypeptide reads, in one-letter code: Peptide chain release factor 1 (360 aa).

N5-methylglutamine is present on Gln234.

It belongs to the prokaryotic/mitochondrial release factor family. Post-translationally, methylated by PrmC. Methylation increases the termination efficiency of RF1.

The protein localises to the cytoplasm. In terms of biological role, peptide chain release factor 1 directs the termination of translation in response to the peptide chain termination codons UAG and UAA. This chain is Peptide chain release factor 1, found in Clostridium perfringens (strain 13 / Type A).